Consider the following 305-residue polypeptide: MVKTKGNQKIVGMHPRNVLRTQPDYTKMAIKYKDFRQQCQLELNGKVSVNFRNEKTLRELTKMLLKEYYDLDVDFAPGSLVPTLALRLNYILWLEDLMEPLNLQNIRGIDIGCGSSCIYSLLGAKKNGWHMLALESKPQNIEYAKENVKRNHMESLIEVYAQPDNTNIFKSYFEQDQQQLQYQFCLCNPPFFDSNLPNPLGGNTRNPERRPAPNNARTGSQEELTCVGGEVQFVQRIIDESLENKERVRIFTTMLGVKANVPRILDYLKELQVANVSTTEFHQGHTTRWAVAWSFHSEPLQQGTT.

The S-adenosyl-L-methionine site is built by arginine 87, glycine 112, glutamate 135, threonine 166, and asparagine 188. A disordered region spans residues 197–221 (PNPLGGNTRNPERRPAPNNARTGSQ).

The protein belongs to the methyltransferase superfamily. METTL16/RlmF family.

It carries out the reaction adenosine in U6 snRNA + S-adenosyl-L-methionine = N(6)-methyladenosine in U6 snRNA + S-adenosyl-L-homocysteine + H(+). In terms of biological role, RNA N6-methyltransferase that mediates N6-methylation of adenine of U6 small nuclear RNA (U6 snRNA). The sequence is that of U6 small nuclear RNA (adenine-(43)-N(6))-methyltransferase from Drosophila melanogaster (Fruit fly).